The chain runs to 345 residues: S-adenosylmethionine:tRNA ribosyltransferase-isomerase (345 aa).

It belongs to the QueA family. In terms of assembly, monomer.

Its subcellular location is the cytoplasm. It carries out the reaction 7-aminomethyl-7-carbaguanosine(34) in tRNA + S-adenosyl-L-methionine = epoxyqueuosine(34) in tRNA + adenine + L-methionine + 2 H(+). It participates in tRNA modification; tRNA-queuosine biosynthesis. Transfers and isomerizes the ribose moiety from AdoMet to the 7-aminomethyl group of 7-deazaguanine (preQ1-tRNA) to give epoxyqueuosine (oQ-tRNA). The sequence is that of S-adenosylmethionine:tRNA ribosyltransferase-isomerase from Helicobacter pylori (strain P12).